The primary structure comprises 170 residues: Adenine phosphoribosyltransferase (170 aa).

Belongs to the purine/pyrimidine phosphoribosyltransferase family. As to quaternary structure, homodimer.

The protein resides in the cytoplasm. It catalyses the reaction AMP + diphosphate = 5-phospho-alpha-D-ribose 1-diphosphate + adenine. Its pathway is purine metabolism; AMP biosynthesis via salvage pathway; AMP from adenine: step 1/1. Catalyzes a salvage reaction resulting in the formation of AMP, that is energically less costly than de novo synthesis. The polypeptide is Adenine phosphoribosyltransferase (Alkaliphilus metalliredigens (strain QYMF)).